The sequence spans 169 residues: Der GTPase-activating protein YihI (169 aa).

Disordered stretches follow at residues 1-100 and 144-169; these read MKPS…AELE and GLSY…LRGN. Over residues 10–19 the composition is skewed to basic residues; it reads SKGHAKARRK. Basic and acidic residues predominate over residues 20–30; the sequence is TREELDQEARD. The segment covering 31-40 has biased composition (basic residues); that stretch reads RKRQKKRRGH. Residues 49–58 are compositionally biased toward polar residues; sequence GNTSSGSKGQ. Residues 147-159 are compositionally biased toward acidic residues; that stretch reads YDDDEEEEEDEKQ. A compositionally biased stretch (basic and acidic residues) spans 160–169; sequence EDMMRLLRGN.

This sequence belongs to the YihI family. As to quaternary structure, interacts with Der.

A GTPase-activating protein (GAP) that modifies Der/EngA GTPase function. May play a role in ribosome biogenesis. The polypeptide is Der GTPase-activating protein YihI (Escherichia coli (strain SMS-3-5 / SECEC)).